A 119-amino-acid polypeptide reads, in one-letter code: Beta-2-microglobulin (119 aa).

Residues 1 to 20 (MASSVVVALLVLLSLSGLEA) form the signal peptide. One can recognise an Ig-like C1-type domain in the interval 25 to 114 (PKIQVYSRHP…VTFSTPKTVK (90 aa)). The cysteines at positions 45 and 100 are disulfide-linked.

The protein belongs to the beta-2-microglobulin family. As to quaternary structure, heterodimer of an alpha chain and a beta chain. Beta-2-microglobulin is the beta-chain of major histocompatibility complex class I molecules.

The protein resides in the secreted. In terms of biological role, component of the class I major histocompatibility complex (MHC). Involved in the presentation of peptide antigens to the immune system. This Callithrix aurita (White-eared marmoset) protein is Beta-2-microglobulin (B2M).